We begin with the raw amino-acid sequence, 676 residues long: DNA-directed RNA polymerase subunit beta' (676 aa).

Zn(2+) contacts are provided by Cys-69, Cys-71, Cys-87, and Cys-90. Mg(2+)-binding residues include Asp-489, Asp-491, and Asp-493.

This sequence belongs to the RNA polymerase beta' chain family. RpoC1 subfamily. In terms of assembly, in plastids the minimal PEP RNA polymerase catalytic core is composed of four subunits: alpha, beta, beta', and beta''. When a (nuclear-encoded) sigma factor is associated with the core the holoenzyme is formed, which can initiate transcription. It depends on Mg(2+) as a cofactor. Zn(2+) is required as a cofactor.

The protein resides in the plastid. The protein localises to the chloroplast. The catalysed reaction is RNA(n) + a ribonucleoside 5'-triphosphate = RNA(n+1) + diphosphate. DNA-dependent RNA polymerase catalyzes the transcription of DNA into RNA using the four ribonucleoside triphosphates as substrates. This Lolium perenne (Perennial ryegrass) protein is DNA-directed RNA polymerase subunit beta'.